The sequence spans 323 residues: Lipoyl synthase (323 aa).

[4Fe-4S] cluster-binding residues include cysteine 69, cysteine 74, cysteine 80, cysteine 95, cysteine 99, cysteine 102, and serine 310. The 219-residue stretch at 81–299 (WTHGTLTVMI…EAWGYELGFR (219 aa)) folds into the Radical SAM core domain.

This sequence belongs to the radical SAM superfamily. Lipoyl synthase family. The cofactor is [4Fe-4S] cluster.

The protein resides in the cytoplasm. The catalysed reaction is [[Fe-S] cluster scaffold protein carrying a second [4Fe-4S](2+) cluster] + N(6)-octanoyl-L-lysyl-[protein] + 2 oxidized [2Fe-2S]-[ferredoxin] + 2 S-adenosyl-L-methionine + 4 H(+) = [[Fe-S] cluster scaffold protein] + N(6)-[(R)-dihydrolipoyl]-L-lysyl-[protein] + 4 Fe(3+) + 2 hydrogen sulfide + 2 5'-deoxyadenosine + 2 L-methionine + 2 reduced [2Fe-2S]-[ferredoxin]. It functions in the pathway protein modification; protein lipoylation via endogenous pathway; protein N(6)-(lipoyl)lysine from octanoyl-[acyl-carrier-protein]: step 2/2. Catalyzes the radical-mediated insertion of two sulfur atoms into the C-6 and C-8 positions of the octanoyl moiety bound to the lipoyl domains of lipoate-dependent enzymes, thereby converting the octanoylated domains into lipoylated derivatives. This is Lipoyl synthase from Thermus thermophilus (strain ATCC 27634 / DSM 579 / HB8).